The following is a 276-amino-acid chain: Undecaprenyl-diphosphatase (276 aa).

A run of 7 helical transmembrane segments spans residues 46–66 (AGAS…LIYF), 94–114 (LMGI…VKAI), 122–142 (LWVV…AERV), 152–172 (LGIG…IPGV), 196–216 (SFLL…IAEF), 226–246 (LGTL…IRFL), and 253–273 (VFIV…ALGF).

This sequence belongs to the UppP family.

It is found in the cell inner membrane. The enzyme catalyses di-trans,octa-cis-undecaprenyl diphosphate + H2O = di-trans,octa-cis-undecaprenyl phosphate + phosphate + H(+). Catalyzes the dephosphorylation of undecaprenyl diphosphate (UPP). Confers resistance to bacitracin. This chain is Undecaprenyl-diphosphatase, found in Synechococcus sp. (strain JA-3-3Ab) (Cyanobacteria bacterium Yellowstone A-Prime).